We begin with the raw amino-acid sequence, 228 residues long: Phosphatidylserine decarboxylase proenzyme (228 aa).

The active-site Schiff-base intermediate with substrate; via pyruvic acid is the S197. A Pyruvic acid (Ser); by autocatalysis modification is found at S197.

It belongs to the phosphatidylserine decarboxylase family. PSD-A subfamily. As to quaternary structure, heterodimer of a large membrane-associated beta subunit and a small pyruvoyl-containing alpha subunit. Pyruvate is required as a cofactor. Is synthesized initially as an inactive proenzyme. Formation of the active enzyme involves a self-maturation process in which the active site pyruvoyl group is generated from an internal serine residue via an autocatalytic post-translational modification. Two non-identical subunits are generated from the proenzyme in this reaction, and the pyruvate is formed at the N-terminus of the alpha chain, which is derived from the carboxyl end of the proenzyme. The post-translation cleavage follows an unusual pathway, termed non-hydrolytic serinolysis, in which the side chain hydroxyl group of the serine supplies its oxygen atom to form the C-terminus of the beta chain, while the remainder of the serine residue undergoes an oxidative deamination to produce ammonia and the pyruvoyl prosthetic group on the alpha chain.

The protein localises to the cell membrane. It carries out the reaction a 1,2-diacyl-sn-glycero-3-phospho-L-serine + H(+) = a 1,2-diacyl-sn-glycero-3-phosphoethanolamine + CO2. Its pathway is phospholipid metabolism; phosphatidylethanolamine biosynthesis; phosphatidylethanolamine from CDP-diacylglycerol: step 2/2. Catalyzes the formation of phosphatidylethanolamine (PtdEtn) from phosphatidylserine (PtdSer). This is Phosphatidylserine decarboxylase proenzyme from Bacteroides thetaiotaomicron (strain ATCC 29148 / DSM 2079 / JCM 5827 / CCUG 10774 / NCTC 10582 / VPI-5482 / E50).